The following is an 88-amino-acid chain: Small ribosomal subunit protein uS17 (88 aa).

This sequence belongs to the universal ribosomal protein uS17 family. As to quaternary structure, part of the 30S ribosomal subunit.

Functionally, one of the primary rRNA binding proteins, it binds specifically to the 5'-end of 16S ribosomal RNA. The chain is Small ribosomal subunit protein uS17 from Ruthia magnifica subsp. Calyptogena magnifica.